A 280-amino-acid polypeptide reads, in one-letter code: Energy-coupling factor transporter ATP-binding protein EcfA1 (280 aa).

An ABC transporter domain is found at 6-241 (LRTENISFQY…SHMLQEIGLD (236 aa)). ATP is bound at residue 40–47 (GQNGSGKS).

This sequence belongs to the ABC transporter superfamily. Energy-coupling factor EcfA family. As to quaternary structure, forms a stable energy-coupling factor (ECF) transporter complex composed of 2 membrane-embedded substrate-binding proteins (S component), 2 ATP-binding proteins (A component) and 2 transmembrane proteins (T component).

The protein resides in the cell membrane. ATP-binding (A) component of a common energy-coupling factor (ECF) ABC-transporter complex. Unlike classic ABC transporters this ECF transporter provides the energy necessary to transport a number of different substrates. This Bacillus thuringiensis subsp. konkukian (strain 97-27) protein is Energy-coupling factor transporter ATP-binding protein EcfA1.